The primary structure comprises 361 residues: tRNA/tmRNA (uracil-C(5))-methyltransferase (361 aa).

The S-adenosyl-L-methionine site is built by Gln185, Tyr213, Asn218, Glu234, and Asp294. Cys319 acts as the Nucleophile in catalysis. Glu353 acts as the Proton acceptor in catalysis.

Belongs to the class I-like SAM-binding methyltransferase superfamily. RNA M5U methyltransferase family. TrmA subfamily.

It carries out the reaction uridine(54) in tRNA + S-adenosyl-L-methionine = 5-methyluridine(54) in tRNA + S-adenosyl-L-homocysteine + H(+). The enzyme catalyses uridine(341) in tmRNA + S-adenosyl-L-methionine = 5-methyluridine(341) in tmRNA + S-adenosyl-L-homocysteine + H(+). Dual-specificity methyltransferase that catalyzes the formation of 5-methyluridine at position 54 (m5U54) in all tRNAs, and that of position 341 (m5U341) in tmRNA (transfer-mRNA). This is tRNA/tmRNA (uracil-C(5))-methyltransferase from Pseudomonas putida (strain W619).